A 389-amino-acid chain; its full sequence is MNFHEYQSKQLLAEYGIPVPAGKVAATPDEAVEVANSLGNGPWMVKAQIHAGGRGKAGGVKFCKTTDDVKAAAAKMLGTKMSTYQTAGVELPINLVLVTTAGEIVKELYLSILVDRGTKTITYIASSEGGVEIEQVAAETPELIHALNVDFVEGVQGYHGRDFGFKLGLNAKQAGQFASIMVNLYKLFNEKDLALVEINPLAILDDGNLYALDGKFDSDDNAAFRQKQLVAMRDKTQEDETEVTASELDINYVTMDGNIGCMVNGAGLAMATMDVIKLNGGEPANFLDVGGGANKQRVIEAFKLILSSDKVEGIFVNIFGGIVRCDMIAEGIIAAVKEVGVKVPVVVRLEGTNVEEGKQLLRDSGMAIIPADNINDGAKKVVEAVKNAA.

Residues 9 to 244 (KQLLAEYGIP…KTQEDETEVT (236 aa)) enclose the ATP-grasp domain. ATP-binding positions include Lys46, 53 to 55 (GRG), Gly102, and Glu107. Residues Asn199 and Asp213 each contribute to the Mg(2+) site. Residues Asn264 and 321–323 (GIV) contribute to the substrate site.

Belongs to the succinate/malate CoA ligase beta subunit family. In terms of assembly, heterotetramer of two alpha and two beta subunits. Requires Mg(2+) as cofactor.

It catalyses the reaction succinate + ATP + CoA = succinyl-CoA + ADP + phosphate. It carries out the reaction GTP + succinate + CoA = succinyl-CoA + GDP + phosphate. It functions in the pathway carbohydrate metabolism; tricarboxylic acid cycle; succinate from succinyl-CoA (ligase route): step 1/1. Functionally, succinyl-CoA synthetase functions in the citric acid cycle (TCA), coupling the hydrolysis of succinyl-CoA to the synthesis of either ATP or GTP and thus represents the only step of substrate-level phosphorylation in the TCA. The beta subunit provides nucleotide specificity of the enzyme and binds the substrate succinate, while the binding sites for coenzyme A and phosphate are found in the alpha subunit. This chain is Succinate--CoA ligase [ADP-forming] subunit beta, found in Xanthomonas axonopodis pv. citri (strain 306).